A 300-amino-acid polypeptide reads, in one-letter code: Small ribosomal subunit protein uS2 (300 aa).

The interval 278 to 300 is disordered; sequence GEAQTGNEGWGTEAAAPAATTQW.

Belongs to the universal ribosomal protein uS2 family. Component of the small ribosomal subunit. Mature ribosomes consist of a small (40S) and a large (60S) subunit. The 40S subunit contains about 33 different proteins and 1 molecule of RNA (18S). The 60S subunit contains about 49 different proteins and 3 molecules of RNA (25S, 5.8S and 5S). Interacts with rps21.

It is found in the cytoplasm. Functionally, required for the assembly and/or stability of the 40S ribosomal subunit. Required for the processing of the 20S rRNA-precursor to mature 18S rRNA in a late step of the maturation of 40S ribosomal subunits. This is Small ribosomal subunit protein uS2 (rps0) from Pyrenophora tritici-repentis (strain Pt-1C-BFP) (Wheat tan spot fungus).